The chain runs to 758 residues: Thiosulfate reductase molybdopterin-containing subunit PhsA (758 aa).

The segment at residues 1-30 is a signal peptide (tat-type signal); that stretch reads MSISRRSFLQGVGIGCSACALGAFPPGALA. Residues 41-97 form the 4Fe-4S Mo/W bis-MGD-type domain; it reads TTLTPSLCEMCSFRCPIQAQVVNNKTVFIQGNPSAPQQGTRICARGGSGVSLVNDPQ. The [4Fe-4S] cluster site is built by Cys48, Cys51, Cys55, and Cys83.

The protein belongs to the prokaryotic molybdopterin-containing oxidoreductase family. In terms of assembly, composed of three subunits: PhsA, PhsB and PhsC. [4Fe-4S] cluster serves as cofactor. The cofactor is Mo-bis(molybdopterin guanine dinucleotide). Post-translationally, predicted to be exported by the Tat system. The position of the signal peptide cleavage has not been experimentally proven.

It localises to the periplasm. It carries out the reaction a quinone + hydrogen sulfide + sulfite + 2 H(+) = thiosulfate + a quinol. In terms of biological role, component of the PhsABC thiosulfate reductase that catalyzes the reduction of thiosulfate to sulfite and hydrogen sulfide, with menaquinol as the sole electron donor. Proton motive force (PMF) is required to drive transmembrane electron transfer within the reductase. The PhsA subunit contains the active site molybdenum-bis(molybdopterin guanine dinucleotide) (Mo-bis-MGD) cofactor. In Salmonella typhimurium (strain LT2 / SGSC1412 / ATCC 700720), this protein is Thiosulfate reductase molybdopterin-containing subunit PhsA.